We begin with the raw amino-acid sequence, 298 residues long: GTP cyclohydrolase FolE2 (298 aa).

This sequence belongs to the GTP cyclohydrolase IV family.

The catalysed reaction is GTP + H2O = 7,8-dihydroneopterin 3'-triphosphate + formate + H(+). It functions in the pathway cofactor biosynthesis; 7,8-dihydroneopterin triphosphate biosynthesis; 7,8-dihydroneopterin triphosphate from GTP: step 1/1. Its function is as follows. Converts GTP to 7,8-dihydroneopterin triphosphate. This is GTP cyclohydrolase FolE2 from Neisseria meningitidis serogroup C (strain 053442).